Consider the following 441-residue polypeptide: ATP-dependent protease ATPase subunit HslU (441 aa).

ATP contacts are provided by residues I18, 60 to 65 (GVGKTE), D254, E319, and R391.

It belongs to the ClpX chaperone family. HslU subfamily. In terms of assembly, a double ring-shaped homohexamer of HslV is capped on each side by a ring-shaped HslU homohexamer. The assembly of the HslU/HslV complex is dependent on binding of ATP.

The protein localises to the cytoplasm. Its function is as follows. ATPase subunit of a proteasome-like degradation complex; this subunit has chaperone activity. The binding of ATP and its subsequent hydrolysis by HslU are essential for unfolding of protein substrates subsequently hydrolyzed by HslV. HslU recognizes the N-terminal part of its protein substrates and unfolds these before they are guided to HslV for hydrolysis. This chain is ATP-dependent protease ATPase subunit HslU, found in Shewanella pealeana (strain ATCC 700345 / ANG-SQ1).